The following is a 229-amino-acid chain: GTP cyclohydrolase 1 (229 aa).

Residues C116, H119, and C187 each contribute to the Zn(2+) site.

It belongs to the GTP cyclohydrolase I family. Toroid-shaped homodecamer, composed of two pentamers of five dimers.

It carries out the reaction GTP + H2O = 7,8-dihydroneopterin 3'-triphosphate + formate + H(+). The protein operates within cofactor biosynthesis; 7,8-dihydroneopterin triphosphate biosynthesis; 7,8-dihydroneopterin triphosphate from GTP: step 1/1. The polypeptide is GTP cyclohydrolase 1 (Synechococcus sp. (strain JA-3-3Ab) (Cyanobacteria bacterium Yellowstone A-Prime)).